Here is a 178-residue protein sequence, read N- to C-terminus: CASP-like protein 5A1 (178 aa).

Residues 1–11 (MFASRPAVHPV) show a composition bias toward low complexity. Residues 1–25 (MFASRPAVHPVEAPPPPDPAEQPRG) form a disordered region. Over 1-37 (MFASRPAVHPVEAPPPPDPAEQPRGVLMKDLPGMPGT) the chain is Cytoplasmic. A helical transmembrane segment spans residues 38 to 58 (AGGLGLRLAQFAFAAVALAVM). Over 59 to 69 (ASTNDFPSVTS) the chain is Extracellular. Residues 70–90 (FCFLVAAAILQCLWSFSLAIV) traverse the membrane as a helical segment. At 91–105 (DIYALLVKRCLRNRR) the chain is on the cytoplasmic side. Residues 106–126 (AVCLFAIGDGITAALTFSAAC) traverse the membrane as a helical segment. The Extracellular segment spans residues 127–152 (ASSGITVLIDNDLDLCSENHCASFES). A helical transmembrane segment spans residues 153 to 173 (ATAMAFLSWFALSPSFLLNFW). Over 174–178 (SMASG) the chain is Cytoplasmic.

Belongs to the Casparian strip membrane proteins (CASP) family. In terms of assembly, homodimer and heterodimers.

Its subcellular location is the cell membrane. The polypeptide is CASP-like protein 5A1 (Oryza sativa subsp. japonica (Rice)).